The chain runs to 84 residues: Small ribosomal subunit protein bS20 (84 aa).

Residues 1 to 25 (MPVIKSAMKRVRTSEKAAARNRSQM) form a disordered region.

This sequence belongs to the bacterial ribosomal protein bS20 family.

Binds directly to 16S ribosomal RNA. This Pediococcus pentosaceus (strain ATCC 25745 / CCUG 21536 / LMG 10740 / 183-1w) protein is Small ribosomal subunit protein bS20.